A 337-amino-acid chain; its full sequence is Pyridoxal 5'-phosphate synthase subunit PdxS (337 aa).

D65 provides a ligand contact to D-ribose 5-phosphate. The Schiff-base intermediate with D-ribose 5-phosphate role is filled by K122. G194 serves as a coordination point for D-ribose 5-phosphate. K206 is a binding site for D-glyceraldehyde 3-phosphate. D-ribose 5-phosphate contacts are provided by residues G255 and 276 to 277; that span reads GS.

This sequence belongs to the PdxS/SNZ family. In the presence of PdxT, forms a dodecamer of heterodimers.

The enzyme catalyses aldehydo-D-ribose 5-phosphate + D-glyceraldehyde 3-phosphate + L-glutamine = pyridoxal 5'-phosphate + L-glutamate + phosphate + 3 H2O + H(+). It functions in the pathway cofactor biosynthesis; pyridoxal 5'-phosphate biosynthesis. In terms of biological role, catalyzes the formation of pyridoxal 5'-phosphate from ribose 5-phosphate (RBP), glyceraldehyde 3-phosphate (G3P) and ammonia. The ammonia is provided by the PdxT subunit. Can also use ribulose 5-phosphate and dihydroxyacetone phosphate as substrates, resulting from enzyme-catalyzed isomerization of RBP and G3P, respectively. In Pyrobaculum arsenaticum (strain DSM 13514 / JCM 11321 / PZ6), this protein is Pyridoxal 5'-phosphate synthase subunit PdxS.